A 229-amino-acid polypeptide reads, in one-letter code: Large ribosomal subunit protein uL1 (229 aa).

This sequence belongs to the universal ribosomal protein uL1 family. Part of the 50S ribosomal subunit.

Binds directly to 23S rRNA. The L1 stalk is quite mobile in the ribosome, and is involved in E site tRNA release. Functionally, protein L1 is also a translational repressor protein, it controls the translation of the L11 operon by binding to its mRNA. This Gemmatimonas aurantiaca (strain DSM 14586 / JCM 11422 / NBRC 100505 / T-27) protein is Large ribosomal subunit protein uL1.